The following is a 307-amino-acid chain: Glycerol-3-phosphate dehydrogenase [NAD(P)+] (307 aa).

Residues Phe11, Arg31, and Lys95 each contribute to the NADPH site. The sn-glycerol 3-phosphate site is built by Lys95, Gly121, and Ser123. Ala125 is an NADPH binding site. Sn-glycerol 3-phosphate-binding residues include Lys176, Asp229, Ser239, Arg240, and Asn241. The Proton acceptor role is filled by Lys176. NADPH is bound at residue Arg240. Glu261 provides a ligand contact to NADPH.

Belongs to the NAD-dependent glycerol-3-phosphate dehydrogenase family.

It is found in the cytoplasm. The catalysed reaction is sn-glycerol 3-phosphate + NAD(+) = dihydroxyacetone phosphate + NADH + H(+). It carries out the reaction sn-glycerol 3-phosphate + NADP(+) = dihydroxyacetone phosphate + NADPH + H(+). The protein operates within membrane lipid metabolism; glycerophospholipid metabolism. Catalyzes the reduction of the glycolytic intermediate dihydroxyacetone phosphate (DHAP) to sn-glycerol 3-phosphate (G3P), the key precursor for phospholipid synthesis. The polypeptide is Glycerol-3-phosphate dehydrogenase [NAD(P)+] (Jannaschia sp. (strain CCS1)).